The sequence spans 333 residues: Phosphate acetyltransferase (333 aa).

Belongs to the phosphate acetyltransferase and butyryltransferase family. Homodimer.

It localises to the cell membrane. It carries out the reaction acetyl-CoA + phosphate = acetyl phosphate + CoA. Its pathway is metabolic intermediate biosynthesis; acetyl-CoA biosynthesis; acetyl-CoA from acetate: step 2/2. This is Phosphate acetyltransferase (pta) from Methanosarcina thermophila.